A 430-amino-acid chain; its full sequence is Tyrosine--tRNA ligase (430 aa).

Tyr-32 serves as a coordination point for L-tyrosine. The 'HIGH' region signature appears at 37–46; the sequence is PTADSLHIGH. 2 residues coordinate L-tyrosine: Tyr-172 and Gln-176. Residues 232 to 236 carry the 'KMSKS' region motif; that stretch reads KFGKT. An ATP-binding site is contributed by Lys-235. Residues 362–429 enclose the S4 RNA-binding domain; it reads VKAVDLFVDN…GKKNYYLIIA (68 aa).

This sequence belongs to the class-I aminoacyl-tRNA synthetase family. TyrS type 1 subfamily. Homodimer.

The protein localises to the cytoplasm. It carries out the reaction tRNA(Tyr) + L-tyrosine + ATP = L-tyrosyl-tRNA(Tyr) + AMP + diphosphate + H(+). Catalyzes the attachment of tyrosine to tRNA(Tyr) in a two-step reaction: tyrosine is first activated by ATP to form Tyr-AMP and then transferred to the acceptor end of tRNA(Tyr). In Bacteroides fragilis (strain YCH46), this protein is Tyrosine--tRNA ligase.